The following is a 138-amino-acid chain: MLIPRRVKHRKQHHPGRSGAATGGTKVSFGEYGIQALSPAYVTNRQIESARIAMTRHIKRGGKVWINIYPDRPLTKKPAETRMGSGKGSPEWWVANVKPGRVLFELSGVNEEVAREALRLAIHKLPLKARIVRREGGE.

Residues 1–16 (MLIPRRVKHRKQHHPG) are compositionally biased toward basic residues. The disordered stretch occupies residues 1–24 (MLIPRRVKHRKQHHPGRSGAATGG).

The protein belongs to the universal ribosomal protein uL16 family. In terms of assembly, part of the 50S ribosomal subunit.

In terms of biological role, binds 23S rRNA and is also seen to make contacts with the A and possibly P site tRNAs. The polypeptide is Large ribosomal subunit protein uL16 (Paenarthrobacter aurescens (strain TC1)).